The sequence spans 358 residues: UPF0575 protein C19orf67 (358 aa).

Residues 1–84 are disordered; sequence MATEQWFEGS…PGPAPPRLSL (84 aa). Pro residues-rich tracts occupy residues 17-32 and 70-80; these read ETPP…PPCG and PLVPRPGPAPP.

This sequence belongs to the UPF0575 family.

The polypeptide is UPF0575 protein C19orf67 (C19orf67) (Homo sapiens (Human)).